Consider the following 468-residue polypeptide: Adenosylhomocysteinase (468 aa).

3 residues coordinate substrate: T63, D139, and E164. Residue 165-167 (TTT) coordinates NAD(+). The substrate site is built by K194 and D198. Residues N199, 228-233 (GYGDVG), E251, N300, 321-323 (IGH), and N374 contribute to the NAD(+) site.

It belongs to the adenosylhomocysteinase family. The cofactor is NAD(+).

Its subcellular location is the cytoplasm. It carries out the reaction S-adenosyl-L-homocysteine + H2O = L-homocysteine + adenosine. It functions in the pathway amino-acid biosynthesis; L-homocysteine biosynthesis; L-homocysteine from S-adenosyl-L-homocysteine: step 1/1. May play a key role in the regulation of the intracellular concentration of adenosylhomocysteine. In Stutzerimonas stutzeri (strain A1501) (Pseudomonas stutzeri), this protein is Adenosylhomocysteinase.